The sequence spans 219 residues: Ribose-5-phosphate isomerase A (219 aa).

Residues 28–31 (SGST), 81–84 (DGAD), and 94–97 (KGGG) contribute to the substrate site. E103 acts as the Proton acceptor in catalysis. K121 lines the substrate pocket.

This sequence belongs to the ribose 5-phosphate isomerase family. Homodimer.

It carries out the reaction aldehydo-D-ribose 5-phosphate = D-ribulose 5-phosphate. Its pathway is carbohydrate degradation; pentose phosphate pathway; D-ribose 5-phosphate from D-ribulose 5-phosphate (non-oxidative stage): step 1/1. Catalyzes the reversible conversion of ribose-5-phosphate to ribulose 5-phosphate. This Actinobacillus pleuropneumoniae serotype 5b (strain L20) protein is Ribose-5-phosphate isomerase A.